The chain runs to 366 residues: Phospho-2-dehydro-3-deoxyheptonate aldolase (366 aa).

The protein belongs to the class-I DAHP synthase family.

The catalysed reaction is D-erythrose 4-phosphate + phosphoenolpyruvate + H2O = 7-phospho-2-dehydro-3-deoxy-D-arabino-heptonate + phosphate. Its pathway is metabolic intermediate biosynthesis; chorismate biosynthesis; chorismate from D-erythrose 4-phosphate and phosphoenolpyruvate: step 1/7. Its function is as follows. Stereospecific condensation of phosphoenolpyruvate (PEP) and D-erythrose-4-phosphate (E4P) giving rise to 3-deoxy-D-arabino-heptulosonate-7-phosphate (DAHP). This is Phospho-2-dehydro-3-deoxyheptonate aldolase (aroG) from Corynebacterium glutamicum (strain ATCC 13032 / DSM 20300 / JCM 1318 / BCRC 11384 / CCUG 27702 / LMG 3730 / NBRC 12168 / NCIMB 10025 / NRRL B-2784 / 534).